Consider the following 285-residue polypeptide: Transcription factor LBX1 (285 aa).

The span at 1–20 (MTSKEDGKAAPGEERRRSPL) shows a compositional bias: basic and acidic residues. The interval 1–36 (MTSKEDGKAAPGEERRRSPLDHLPPPANSNKPLTPF) is disordered. Positions 125 to 184 (RRKSRTAFTNHQIYELEKRFLYQKYLSPADRDQIAQQLGLTNAQVITWFQNRRAKLKRDL) form a DNA-binding region, homeobox. Positions 212–285 (EQNSEASGGG…EEDEEIDVDD (74 aa)) are disordered. Over residues 218 to 230 (SGGGGGGGGGGCG) the composition is skewed to gly residues. Residues 272–285 (CSEDEEDEEIDVDD) show a composition bias toward acidic residues.

In terms of assembly, interacts with SKOR1 which acts as a transcriptional corepressor.

Its subcellular location is the nucleus. Transcription factor required for the development of GABAergic interneurons in the dorsal horn of the spinal cord and migration and further development of hypaxial muscle precursor cells for limb muscles, diaphragm and hypoglossal cord. The protein is Transcription factor LBX1 of Rattus norvegicus (Rat).